A 260-amino-acid polypeptide reads, in one-letter code: Triosephosphate isomerase (260 aa).

Asparagine 11 to lysine 13 serves as a coordination point for substrate. Histidine 103 functions as the Electrophile in the catalytic mechanism. The Proton acceptor role is filled by glutamate 175. Residues glycine 181, serine 220, and glycine 241–glycine 242 each bind substrate.

Belongs to the triosephosphate isomerase family. As to quaternary structure, homodimer.

It is found in the cytoplasm. It catalyses the reaction D-glyceraldehyde 3-phosphate = dihydroxyacetone phosphate. The protein operates within carbohydrate biosynthesis; gluconeogenesis. It functions in the pathway carbohydrate degradation; glycolysis; D-glyceraldehyde 3-phosphate from glycerone phosphate: step 1/1. Involved in the gluconeogenesis. Catalyzes stereospecifically the conversion of dihydroxyacetone phosphate (DHAP) to D-glyceraldehyde-3-phosphate (G3P). This Shewanella piezotolerans (strain WP3 / JCM 13877) protein is Triosephosphate isomerase.